The sequence spans 182 residues: Putative manganese efflux pump MntP (182 aa).

Transmembrane regions (helical) follow at residues 6-26, 37-57, 71-91, 101-121, 131-151, and 162-182; these read LIPL…VSLG, ILYI…IGMV, HFAG…SSIL, IGIS…SVGL, VITI…GLFI, and YGEI…LFPI.

The protein belongs to the MntP (TC 9.B.29) family.

It is found in the cell membrane. Probably functions as a manganese efflux pump. The polypeptide is Putative manganese efflux pump MntP (Bacillus cereus (strain Q1)).